We begin with the raw amino-acid sequence, 169 residues long: NADH-quinone oxidoreductase subunit B (169 aa).

Residues Cys42, Cys43, Cys107, and Cys136 each coordinate [4Fe-4S] cluster.

This sequence belongs to the complex I 20 kDa subunit family. In terms of assembly, NDH-1 is composed of 14 different subunits. Subunits NuoB, C, D, E, F, and G constitute the peripheral sector of the complex. [4Fe-4S] cluster serves as cofactor.

The protein localises to the cell inner membrane. The enzyme catalyses a quinone + NADH + 5 H(+)(in) = a quinol + NAD(+) + 4 H(+)(out). NDH-1 shuttles electrons from NADH, via FMN and iron-sulfur (Fe-S) centers, to quinones in the respiratory chain. The immediate electron acceptor for the enzyme in this species is believed to be ubiquinone. Couples the redox reaction to proton translocation (for every two electrons transferred, four hydrogen ions are translocated across the cytoplasmic membrane), and thus conserves the redox energy in a proton gradient. In Nitratiruptor sp. (strain SB155-2), this protein is NADH-quinone oxidoreductase subunit B.